A 134-amino-acid polypeptide reads, in one-letter code: Ribonuclease VapC (134 aa).

A PINc domain is found at 4 to 124 (IVDTSIIIAL…NTKDFKRIPE (121 aa)). Aspartate 6 provides a ligand contact to Mg(2+).

It belongs to the PINc/VapC protein family. Mg(2+) serves as cofactor.

In terms of biological role, toxic component of a type II toxin-antitoxin (TA) system. Has ssRNase activity. Its RNase activity is partially neutralized by cognate antitoxin VapB. Rapidly induces apoptosis upon microinjection into mouse fibroblasts (L929 line). Probably contributes to host cell death if bacterial cell lysis occurs during host infection. The sequence is that of Ribonuclease VapC from Rickettsia bellii (strain RML369-C).